We begin with the raw amino-acid sequence, 926 residues long: DNA mismatch repair protein MutS (926 aa).

A disordered region spans residues 1-67 (MAASPNPLQG…NPNQINDLDQ (67 aa)). Composition is skewed to polar residues over residues 18–44 (QSTT…QLKS) and 57–67 (KNPNQINDLDQ). An ATP-binding site is contributed by 726–733 (GPNASGKS).

It belongs to the DNA mismatch repair MutS family.

In terms of biological role, this protein is involved in the repair of mismatches in DNA. It is possible that it carries out the mismatch recognition step. This protein has a weak ATPase activity. The polypeptide is DNA mismatch repair protein MutS (Prochlorococcus marinus (strain NATL1A)).